We begin with the raw amino-acid sequence, 920 residues long: Protein translocase subunit SecA (920 aa).

ATP is bound by residues glutamine 85, glycine 103 to threonine 107, and aspartate 514. Residues cysteine 904, cysteine 906, cysteine 915, and histidine 916 each contribute to the Zn(2+) site.

It belongs to the SecA family. Monomer and homodimer. Part of the essential Sec protein translocation apparatus which comprises SecA, SecYEG and auxiliary proteins SecDF-YajC and YidC. Requires Zn(2+) as cofactor.

It is found in the cell inner membrane. The protein resides in the cytoplasm. The catalysed reaction is ATP + H2O + cellular proteinSide 1 = ADP + phosphate + cellular proteinSide 2.. In terms of biological role, part of the Sec protein translocase complex. Interacts with the SecYEG preprotein conducting channel. Has a central role in coupling the hydrolysis of ATP to the transfer of proteins into and across the cell membrane, serving both as a receptor for the preprotein-SecB complex and as an ATP-driven molecular motor driving the stepwise translocation of polypeptide chains across the membrane. The sequence is that of Protein translocase subunit SecA from Janthinobacterium sp. (strain Marseille) (Minibacterium massiliensis).